We begin with the raw amino-acid sequence, 62 residues long: Sperm protamine P1 (62 aa).

A disordered region spans residues M1–Y62.

It belongs to the protamine P1 family. In terms of tissue distribution, testis.

It is found in the nucleus. It localises to the chromosome. Functionally, protamines substitute for histones in the chromatin of sperm during the haploid phase of spermatogenesis. They compact sperm DNA into a highly condensed, stable and inactive complex. This chain is Sperm protamine P1 (PRM1), found in Wallabia bicolor (Swamp wallaby).